Reading from the N-terminus, the 911-residue chain is Probable 2-oxoadipate dehydrogenase complex component E1 homolog (911 aa).

Belongs to the alpha-ketoglutarate dehydrogenase family. The cofactor is thiamine diphosphate.

It localises to the mitochondrion. It carries out the reaction N(6)-[(R)-lipoyl]-L-lysyl-[protein] + 2-oxoadipate + H(+) = N(6)-[(R)-S(8)-glutaryldihydrolipoyl]-L-lysyl-[protein] + CO2. 2-oxoadipate dehydrogenase (E1a) component of the 2-oxoadipate dehydrogenase complex (OADHC). Participates in the first step, rate limiting for the overall conversion of 2-oxoadipate (alpha-ketoadipate) to glutaryl-CoA and CO(2) catalyzed by the whole OADHC. Catalyzes the irreversible decarboxylation of 2-oxoadipate via the thiamine diphosphate (ThDP) cofactor and subsequent transfer of the decarboxylated acyl intermediate on an oxidized dihydrolipoyl group that is covalently amidated to the E2 enzyme (dihydrolipoyllysine-residue succinyltransferase or DLST). This chain is Probable 2-oxoadipate dehydrogenase complex component E1 homolog, found in Caenorhabditis elegans.